Consider the following 141-residue polypeptide: Large ribosomal subunit protein uL11 (141 aa).

Belongs to the universal ribosomal protein uL11 family. In terms of assembly, part of the ribosomal stalk of the 50S ribosomal subunit. Interacts with L10 and the large rRNA to form the base of the stalk. L10 forms an elongated spine to which L12 dimers bind in a sequential fashion forming a multimeric L10(L12)X complex. In terms of processing, one or more lysine residues are methylated.

Its function is as follows. Forms part of the ribosomal stalk which helps the ribosome interact with GTP-bound translation factors. The chain is Large ribosomal subunit protein uL11 from Prochlorococcus marinus (strain NATL1A).